The sequence spans 37 residues: Large ribosomal subunit protein bL36 (37 aa).

The protein belongs to the bacterial ribosomal protein bL36 family.

The protein is Large ribosomal subunit protein bL36 of Dechloromonas aromatica (strain RCB).